A 311-amino-acid chain; its full sequence is Transmembrane protein 177 (311 aa).

Residues 1–17 lie on the Mitochondrial matrix side of the membrane; it reads MAGPLWRTAAFVQRHRT. A helical transmembrane segment spans residues 18–38; that stretch reads GLLVGSCAGLFGVPISYHLFP. The Mitochondrial intermembrane segment spans residues 39-166; it reads DPVVQWLYQY…EVVYLESSTT (128 aa). Residues 167–187 form a helical membrane-spanning segment; the sequence is AVHALLAPACLAGTWALGVGA. Residues 188-197 are Mitochondrial matrix-facing; that stretch reads KYTLGLHAGP. Residues 198-218 form a helical membrane-spanning segment; sequence MNLRAAFSLVAAVAGFVAYAF. Over 219 to 311 the chain is Mitochondrial intermembrane; it reads SQDSLTHAVE…WRGMLNPGRS (93 aa).

It belongs to the TMEM177 family. As to quaternary structure, found in a complex with COX20, COA6, MT-CO2/COX2, COX18, SCO1 and SCO2. Interacts with COX20. Interacts with COX1, MT-CO2/COX2, SCO1 and SCO2 in a COX20-dependent manner.

It is found in the mitochondrion inner membrane. Functionally, plays a role in the early steps of cytochrome c oxidase subunit II (MT-CO2/COX2) maturation and is required for the stabilization of COX20 and the newly synthesized MT-CO2/COX2 protein. This chain is Transmembrane protein 177 (TMEM177), found in Homo sapiens (Human).